A 120-amino-acid chain; its full sequence is Non-specific lipid-transfer protein (120 aa).

The signal sequence occupies residues 1–26 (MGVLRSSFVAMMVMYMVLATTPNAEA). 4 disulfides stabilise this stretch: Cys30–Cys79, Cys40–Cys56, Cys57–Cys102, and Cys77–Cys116.

Belongs to the plant LTP family. As to expression, expressed in protoderm cells of somatic and zygotic embryos, and transiently expressed in epidermal cell layers of leaves, flowers and seeds.

In terms of biological role, plant non-specific lipid-transfer proteins transfer phospholipids as well as galactolipids across membranes. May play a role in wax or cutin deposition in the cell walls of expanding epidermal cells and certain secretory tissues. This is Non-specific lipid-transfer protein (EP2) from Daucus carota (Wild carrot).